The following is a 586-amino-acid chain: Madf and zinc finger protein 1 (586 aa).

An involved in interaction with Cp190 region spans residues 161-194; sequence FMSEDDLAPPRKPGRPPRRTRPGQVFKFKVSFIR. Positions 201 to 292 form a DNA-binding region, MADF 1; the sequence is HLIQAYKEHP…KCEFLSVAPV (92 aa). Residues 294 to 319 form an involved in interaction with Cp190 region; the sequence is TPRENEEDNDLTAIKLNFKEENLITT. Residues 320–413 constitute a DNA-binding region (MADF 2); it reads SFIETYANYP…MCSFLPAKGS (94 aa). 6 consecutive C2H2-type zinc fingers follow at residues 418 to 441, 448 to 471, 476 to 498, 504 to 527, 533 to 555, and 561 to 583; these read LYCD…VKAH, YLCS…LRSH, LKCQ…TLIH, HVCD…NGVH, YSCN…IKGH, and KKCE…RRSH.

As to quaternary structure, interacts (via regions flanking MADF domain 1) with Cp190 (via regions between the BTB domain and first zinc finger domain); the interaction is probably direct and is essential for protein function.

It is found in the nucleus. The protein localises to the chromosome. It localises to the nucleoplasm. Chromatin-binding protein involved in the organization of active promoters and insulators. Essential for the activity of heterochromatin promoters; primarily binds to specific motifs within promoters of housekeeping genes. May also associate to a lesser extent with promoters in euchromatin. Mediates recruitment of Cp190, a multifunctional protein involved in the recruitment of transcription complexes, the creation of open chromatin regions and the activity of insulators. Cooperates with pita and su(Hw) to recruit Cp190 and regulate insulator function at the front-ultraabdominal (Fub) boundary. May cooperate with other C2H2 zinc finger proteins, such as M1BP, to recruit CP190 to promoters. May be involved in cellular organization and development of the eye. This is Madf and zinc finger protein 1 from Drosophila melanogaster (Fruit fly).